A 151-amino-acid chain; its full sequence is Linear element protein Mug20 (151 aa).

Residues 56-140 (EEKLRALDKL…CAMEKLKMIE (85 aa)) are a coiled coil.

Component of linear elements (LinEs), which are similar to synaptonemal complexes, at least composed of rec27, rec25, rec10 and mug20. Interacts with rec10.

It localises to the cytoplasm. Its subcellular location is the nucleus. The protein localises to the chromosome. During meiotic DNA recombination, binds to and may help activate DNA double-strand break (DSB) hotspot sites. The polypeptide is Linear element protein Mug20 (Schizosaccharomyces pombe (strain 972 / ATCC 24843) (Fission yeast)).